The primary structure comprises 446 residues: MTKYKVGMVSLGCDKNRVDSEIILGKMSNEYEITNNAKEADVIIVNTCGFIESAKQESIDTILEMAEYKNNYKCKLLIATGCLIQRYGDELKNLIPEIDIMLGVNDYNKIDKVIKEFIEGNKEASKLLNYSDENINEGNRILTTQKESAYIRIAEGCNNFCTYCIIPKIRGKFRSRRMENIISEATDLASQGVKELILIAQDTTQYGSDIYGKKNLHVLLKELSKIEGIKWIRVLYCYPEAIYDELIEEIAVNEKVVKYLDIPIQHISDHVLKLMGRKTSKKDITDKIEKLRKSIPNIIIRTTFIVGFPQETQEDFEEILEFLQEYKLDKVGVFKYSREEDTPASKMDGQIDEAIKKEREEKLMLSQEKISNDINKLKVNKKYDILIEEYDGEFYKGRNFEMAPDIDGNVFFESPKNLEIGEFVKVKIIKNMDYDLIGVVEDESCK.

In terms of domain architecture, MTTase N-terminal spans 4–119; sequence YKVGMVSLGC…IDKVIKEFIE (116 aa). The [4Fe-4S] cluster site is built by Cys-13, Cys-48, Cys-82, Cys-157, Cys-161, and Cys-164. The Radical SAM core domain maps to 143 to 373; that stretch reads TTQKESAYIR…MLSQEKISND (231 aa). Residues 376-442 enclose the TRAM domain; it reads KLKVNKKYDI…DYDLIGVVED (67 aa).

It belongs to the methylthiotransferase family. RimO subfamily. [4Fe-4S] cluster serves as cofactor.

It is found in the cytoplasm. The catalysed reaction is L-aspartate(89)-[ribosomal protein uS12]-hydrogen + (sulfur carrier)-SH + AH2 + 2 S-adenosyl-L-methionine = 3-methylsulfanyl-L-aspartate(89)-[ribosomal protein uS12]-hydrogen + (sulfur carrier)-H + 5'-deoxyadenosine + L-methionine + A + S-adenosyl-L-homocysteine + 2 H(+). Its function is as follows. Catalyzes the methylthiolation of an aspartic acid residue of ribosomal protein uS12. The polypeptide is Ribosomal protein uS12 methylthiotransferase RimO (Clostridium botulinum (strain Eklund 17B / Type B)).